The chain runs to 426 residues: Endothelin-1 receptor (426 aa).

A signal peptide spans 1-20 (METFCLKVTFWVALVGYVIG). Topologically, residues 21–79 (DHPESYSTNLSTPVDFTTFHGTELSFLVTTHRPTNLALPSNGSMHSYCPQQTKITSAFK) are extracellular. Residues Asn-29 and Asn-61 are each glycosylated (N-linked (GlcNAc...) asparagine). The helical transmembrane segment at 80–101 (YINTVISCTIFIVGMVGNATLL) threads the bilayer. Topologically, residues 102–111 (RIIYQNKCMR) are cytoplasmic. A helical membrane pass occupies residues 112-131 (NGPNALIASLALGDLIYVVI). Residues 132–158 (DLPINVFKLLAGRWPFDHNDFGVFLCK) are Extracellular-facing. Cys-157 and Cys-238 are oxidised to a cystine. The helical transmembrane segment at 159 to 180 (LFPFLQKSSVGITVLNLCALSV) threads the bilayer. Topologically, residues 181-204 (DRYRAVASWSRVQGIGIPLITAIE) are cytoplasmic. A helical transmembrane segment spans residues 205-228 (IVSIWILSFILAIPEAIGFVMVPF). Topologically, residues 229–255 (EYKGEQHKTCMLNATSKFMEFYQDVKD) are extracellular. Asn-241 carries N-linked (GlcNAc...) asparagine glycosylation. Residues 256–277 (WWLFGFYFCMPLVCTAIFYTLM) form a helical membrane-spanning segment. Over 278–305 (TCEMLNRRNGSLRIALSEHLKQRREVAK) the chain is Cytoplasmic. The chain crosses the membrane as a helical span at residues 306–327 (TVFCLVVIFALCWFPLHLSRIL). Over 328–346 (KKTVYDEMDKNRCELLSFL) the chain is Extracellular. A helical membrane pass occupies residues 347–371 (RLMDYIGINLATMNSCINPIALYFV). The Cytoplasmic segment spans residues 372-426 (SKKFKNCFQSCLCCCCYQSKSLMTSVPMNGTSIQWKNHEQNNHNTERSSHKDSIN). The residue at position 424 (Ser-424) is a Phosphoserine.

It belongs to the G-protein coupled receptor 1 family. Endothelin receptor subfamily. EDNRA sub-subfamily. Interacts with HDAC7 and KAT5.

It is found in the cell membrane. Functionally, receptor for endothelin-1. Mediates its action by association with G proteins that activate a phosphatidylinositol-calcium second messenger system. The rank order of binding affinities for ET-A is: ET1 &gt; ET2 &gt;&gt; ET3. The chain is Endothelin-1 receptor from Canis lupus familiaris (Dog).